A 272-amino-acid polypeptide reads, in one-letter code: Putative phosphoenolpyruvate synthase regulatory protein (272 aa).

Residue glycine 152–threonine 159 coordinates ADP.

It belongs to the pyruvate, phosphate/water dikinase regulatory protein family. PSRP subfamily.

It carries out the reaction [pyruvate, water dikinase] + ADP = [pyruvate, water dikinase]-phosphate + AMP + H(+). The enzyme catalyses [pyruvate, water dikinase]-phosphate + phosphate + H(+) = [pyruvate, water dikinase] + diphosphate. In terms of biological role, bifunctional serine/threonine kinase and phosphorylase involved in the regulation of the phosphoenolpyruvate synthase (PEPS) by catalyzing its phosphorylation/dephosphorylation. The polypeptide is Putative phosphoenolpyruvate synthase regulatory protein (Ectopseudomonas mendocina (strain ymp) (Pseudomonas mendocina)).